We begin with the raw amino-acid sequence, 211 residues long: Minor capsid protein VP2 (211 aa).

Belongs to the norovirus VP2 family. As to quaternary structure, homooligomer. The portal-like structure consists in 12 copies of VP2. Interacts with capsid protein VP1.

It is found in the virion. It localises to the host cytoplasm. Functionally, minor structural protein that forms a portal-like structure at a unique three-fold axis of symmetry, following binding to the host receptor. The channel formed by VP2 may allow the delivery of the viral genome through the host endosomal membrane. The protein is Minor capsid protein VP2 of Homo sapiens (Human).